The primary structure comprises 385 residues: DNA replication and repair protein RecF (385 aa).

ATP is bound at residue 30–37; sequence GRNGQGKT.

The protein belongs to the RecF family.

It localises to the cytoplasm. In terms of biological role, the RecF protein is involved in DNA metabolism; it is required for DNA replication and normal SOS inducibility. RecF binds preferentially to single-stranded, linear DNA. It also seems to bind ATP. This Leifsonia xyli subsp. xyli (strain CTCB07) protein is DNA replication and repair protein RecF.